The sequence spans 444 residues: Glutamate-1-semialdehyde 2,1-aminomutase (444 aa).

Lys267 is modified (N6-(pyridoxal phosphate)lysine).

Belongs to the class-III pyridoxal-phosphate-dependent aminotransferase family. HemL subfamily. In terms of assembly, homodimer. Pyridoxal 5'-phosphate is required as a cofactor.

The protein localises to the cytoplasm. It catalyses the reaction (S)-4-amino-5-oxopentanoate = 5-aminolevulinate. Its pathway is porphyrin-containing compound metabolism; protoporphyrin-IX biosynthesis; 5-aminolevulinate from L-glutamyl-tRNA(Glu): step 2/2. The chain is Glutamate-1-semialdehyde 2,1-aminomutase from Xylella fastidiosa (strain M12).